Reading from the N-terminus, the 231-residue chain is NADH-ubiquinone oxidoreductase chain 4 (231 aa).

The next 6 membrane-spanning stretches (helical) occupy residues 1 to 21 (PIAGSMVLAAILLKLGGYGII), 34 to 54 (MFLPFIVLALWGAILANLTCL), 61 to 80 (SLIAYSSISHMGLVVAAIII), 84 to 106 (WGLTGAMTLMIAHGFTSSALFCL), 128 to 148 (ILPMTTTWWLLANLMNIATPP), and 169 to 189 (TIILLGLSMLITASYSLHMFL).

It belongs to the complex I subunit 4 family.

The protein localises to the mitochondrion membrane. It catalyses the reaction a ubiquinone + NADH + 5 H(+)(in) = a ubiquinol + NAD(+) + 4 H(+)(out). In terms of biological role, core subunit of the mitochondrial membrane respiratory chain NADH dehydrogenase (Complex I) that is believed to belong to the minimal assembly required for catalysis. Complex I functions in the transfer of electrons from NADH to the respiratory chain. The immediate electron acceptor for the enzyme is believed to be ubiquinone. In Atropoides picadoi (Picado's pit viper), this protein is NADH-ubiquinone oxidoreductase chain 4 (MT-ND4).